We begin with the raw amino-acid sequence, 89 residues long: Small ribosomal subunit protein uS19 (89 aa).

It belongs to the universal ribosomal protein uS19 family.

Its function is as follows. Protein S19 forms a complex with S13 that binds strongly to the 16S ribosomal RNA. In Porphyromonas gingivalis (strain ATCC 33277 / DSM 20709 / CIP 103683 / JCM 12257 / NCTC 11834 / 2561), this protein is Small ribosomal subunit protein uS19.